Consider the following 248-residue polypeptide: Gamma-glutamyl peptidase 2 (248 aa).

The Glutamine amidotransferase type-1 domain maps to 17 to 212; that stretch reads SEFVKEMYGG…IDRVHKIKFV (196 aa). Residue cysteine 101 is the Nucleophile of the active site. Catalysis depends on residues histidine 191 and glutamate 193.

This sequence belongs to the peptidase C26 family.

The protein resides in the cytoplasm. The protein localises to the cytosol. It catalyses the reaction an S-[(1E)-1-(hydroxyimino)-omega-(methylsulfanyl)alkyl]-L-glutathione + H2O = an S-[(1E)-1-(hydroxyimino)-omega-(methylsulfanyl)alkyl]-L-cysteinylglycine + L-glutamate. The catalysed reaction is (E)-1-(glutathione-S-yl)-2-(1H-indol-3-yl)acetohydroximate + H2O = (E)-1-(glycyl-L-cystein-S-yl)-2-(1H-indol-3-yl)acetohydroximate + L-glutamate. It carries out the reaction 2-(glutathion-S-yl)-2-(1H-indol-3-yl)acetonitrile + H2O = 2-(glycyl-L-cystein-S-yl)-2-(1H-indol-3-yl)acetonitrile + L-glutamate. The enzyme catalyses (Z)-1-(glutathione-S-yl)-2-phenylacetohydroximate + H2O = (Z)-1-(glycyl-L-cystein-S-yl)-2-phenylacetohydroximate + L-glutamate. The protein operates within secondary metabolite biosynthesis. Its function is as follows. Involved in glucosinolate biosynthesis. Hydrolyzes the gamma-glutamyl peptide bond of several glutathione (GSH) conjugates to produce Cys-Gly conjugates related to glucosinolates. The gamma-Glu-Cys-Gly-GSH conjugates are the sulfur-donating molecule in glucosinolate biosynthesis. This is Gamma-glutamyl peptidase 2 from Arabidopsis thaliana (Mouse-ear cress).